Here is a 340-residue protein sequence, read N- to C-terminus: MANPLISNHHGKNGKYTQAFLEQNGPGDARPTALDILKDNDRIDSMKDKVFLLTGSSGGIGIETGRALAATGGKVYLGVRDLEKGKQALEEILEPGRVELLELDIGSMESVRTAAKTFLSKSTQLNVLVNNAGIMACSEAKTADGFESQLAINYLGHFLLYKLLEQTLLSSSTPEFQSRVVNVSSAGHHMSSVVLDNINLEGEYEEWKAYGNAKTACIWMTNEIEHRYGSKGLHGLSLMPGGIATGLQRHVDPETLKQWGSSEPAQKYGKSSAQGAATTITAAFGKEWEGKGGVYLEDCQEAGPVPEGGTLAVGVAPHAFDPEGEKKLWDLSLKMLDLSE.

Residues I60, K84, D104, N131, and K162 each contribute to the NADP(+) site. S184 functions as the Proton donor in the catalytic mechanism. Y210 and K214 together coordinate NADP(+). Y210 serves as the catalytic Proton acceptor. K214 functions as the Lowers pKa of active site Tyr in the catalytic mechanism.

It belongs to the short-chain dehydrogenases/reductases (SDR) family.

The protein operates within sesquiterpene biosynthesis. Functionally, short-chain dehydrogenase/reductase; part of the gene cluster that mediates the biosynthesis of PR-toxin, a bicyclic sesquiterpene belonging to the eremophilane class and acting as a mycotoxin. The first step of the pathway is catalyzed by the aristolochene synthase which performs the cyclization of trans,trans-farnesyl diphosphate (FPP) to the bicyclic sesquiterpene aristolochene. Following the formation of aristolochene, the non-oxygenated aristolochene is converted to the trioxygenated intermediate eremofortin B, via 7-epi-neopetasone. This conversion appears to involve three enzymes, a hydroxysterol oxidase-like enzyme, the quinone-oxidase prx3 that forms the quinone-type-structure in the bicyclic nucleus of aristolochene with the C8-oxo group and the C-3 hydroxyl group, and the P450 monooxygenase prx9 that introduces the epoxide at the double bond between carbons 1 and 2. No monoxy or dioxy-intermediates have been reported to be released to the broth, so these three early oxidative reactions may be coupled together. Eremofortin B is further oxidized by another P450 monooxygenase, that introduces a second epoxide between carbons 7 and 11 prior to acetylation to eremofortin A by the acetyltransferase prx11. The second epoxidation may be performed by a second P450 monooxygenase. After the acetylation step, eremofortin A is converted to eremofortin C and then to PR-toxin. First the conversion of eremofortin A to eremofortin C proceeds by oxidation of the side chain of the molecule at C-12 and is catalyzed by the short-chain oxidoreductase prx1. The cytochrome P450 monooxygenase prx8 also plays a role in this step. The primary alcohol formed at C-12 is finally oxidized by the short-chain alcohol dehydrogenase prx4 that forms PR-toxin. The chain is Short-chain dehydrogenase/reductase prx1 from Penicillium rubens (strain ATCC 28089 / DSM 1075 / NRRL 1951 / Wisconsin 54-1255) (Penicillium chrysogenum).